The primary structure comprises 498 residues: NADH-quinone oxidoreductase subunit N 2 (498 aa).

14 helical membrane passes run 19–39, 47–67, 83–103, 114–134, 136–156, 171–191, 215–235, 249–269, 282–302, 317–337, 345–365, 389–409, 420–440, and 468–488; these read VATQ…IALF, IVGY…IPLW, YSLT…VLSL, SEYY…AQGA, LIIL…LTGF, LLIG…LYGA, IYLL…VAMA, PTPI…AALL, IWAP…NIGA, IGHA…GGIA, VLLY…VLIA, LAVA…TGGF, WLSG…IAAF, and AGLA…TPAI.

This sequence belongs to the complex I subunit 2 family. NDH-1 is composed of 14 different subunits. Subunits NuoA, H, J, K, L, M, N constitute the membrane sector of the complex.

It is found in the cell membrane. The catalysed reaction is a quinone + NADH + 5 H(+)(in) = a quinol + NAD(+) + 4 H(+)(out). Functionally, NDH-1 shuttles electrons from NADH, via FMN and iron-sulfur (Fe-S) centers, to quinones in the respiratory chain. The immediate electron acceptor for the enzyme in this species is believed to be ubiquinone. Couples the redox reaction to proton translocation (for every two electrons transferred, four hydrogen ions are translocated across the cytoplasmic membrane), and thus conserves the redox energy in a proton gradient. The sequence is that of NADH-quinone oxidoreductase subunit N 2 from Roseiflexus castenholzii (strain DSM 13941 / HLO8).